We begin with the raw amino-acid sequence, 286 residues long: Deleted in azoospermia-like-B (286 aa).

The 82-residue stretch at Asn33–Val114 folds into the RRM domain. The 26-residue stretch at Ala155–Gln180 folds into the DAZ domain.

Belongs to the RRM DAZ family. As to quaternary structure, interacts with the C-terminus of pabp1 and with epabp. Prior to oocyte maturation, found in a complex with epabp and pum2 proteins and spdy1 mRNA; pum2 dissociates from the complex during maturation.

Its subcellular location is the cytoplasm. Its function is as follows. RNA-binding protein that is required for primordial germ cell (PGC) differentiation and indirectly necessary for the migration of PGCs through the endoderm. May promote meiotic cell division during spermatogenesis. Shows a preference for G- and U-rich RNAs and probably binds the 3'-UTR of target mRNAs. Stimulates the initiation of translation of mRNAs through the recruitment of poly(A)-binding proteins (PABPs). This chain is Deleted in azoospermia-like-B (dazl-b), found in Xenopus laevis (African clawed frog).